The primary structure comprises 479 residues: Beta-amyrin 28-monooxygenase (479 aa).

The helical transmembrane segment at 5 to 25 threads the bilayer; it reads FYLSLLLLFVTFISLSLFFIF. Cys-426 is a heme binding site.

Belongs to the cytochrome P450 family. It depends on heme as a cofactor. As to expression, expressed in roots, nodules and flowers.

It is found in the membrane. The enzyme catalyses beta-amyrin + 3 reduced [NADPH--hemoprotein reductase] + 3 O2 = oleanolate + 3 oxidized [NADPH--hemoprotein reductase] + 4 H2O + 4 H(+). Catalyzes the carboxylation of beta-amyrin at the C-28 position to form oleanolic acid. Involved in an early step in the hemolytic saponin biosynthetic pathway. Catalyzes the carboxylation of alpha-amyrin and lupeol at the C-28 position to form ursolic acid and betulinic acid respectively. This Medicago truncatula (Barrel medic) protein is Beta-amyrin 28-monooxygenase.